The following is a 380-amino-acid chain: Putative 8-amino-7-oxononanoate synthase (380 aa).

R18 serves as a coordination point for substrate. 106–107 (GY) serves as a coordination point for pyridoxal 5'-phosphate. Position 131 (H131) interacts with substrate. Residues S179, 205 to 208 (DEAH), and 236 to 239 (TFGK) contribute to the pyridoxal 5'-phosphate site. K239 is modified (N6-(pyridoxal phosphate)lysine). Residue T352 coordinates substrate.

The protein belongs to the class-II pyridoxal-phosphate-dependent aminotransferase family. BioF subfamily. In terms of assembly, homodimer. Pyridoxal 5'-phosphate serves as cofactor.

The enzyme catalyses 6-carboxyhexanoyl-[ACP] + L-alanine + H(+) = (8S)-8-amino-7-oxononanoate + holo-[ACP] + CO2. Its pathway is cofactor biosynthesis; biotin biosynthesis. Functionally, catalyzes the decarboxylative condensation of pimeloyl-[acyl-carrier protein] and L-alanine to produce 8-amino-7-oxononanoate (AON), [acyl-carrier protein], and carbon dioxide. This chain is Putative 8-amino-7-oxononanoate synthase (bioF), found in Neisseria meningitidis serogroup C / serotype 2a (strain ATCC 700532 / DSM 15464 / FAM18).